A 524-amino-acid chain; its full sequence is Cytochrome P450 1A1 (524 aa).

The mitochondrial targeting signal stretch occupies residues 33–44; that stretch reads LRTQVPKGLKTP. The O-linked (GlcNAc) serine glycan is linked to Ser-71. A substrate-binding site is contributed by Phe-228. Cys-461 lines the heme pocket.

Belongs to the cytochrome P450 family. As to quaternary structure, interacts with cytosolic chaperones HSP70 and HSP90; this interaction is required for initial targeting to mitochondria. Interacts (via mitochondrial targeting signal) with TOMM40 (via N-terminus); this interaction is required for translocation across the mitochondrial outer membrane. Heme serves as cofactor.

Its subcellular location is the endoplasmic reticulum membrane. The protein localises to the mitochondrion inner membrane. It localises to the microsome membrane. The protein resides in the cytoplasm. The catalysed reaction is an organic molecule + reduced [NADPH--hemoprotein reductase] + O2 = an alcohol + oxidized [NADPH--hemoprotein reductase] + H2O + H(+). It catalyses the reaction estrone + reduced [NADPH--hemoprotein reductase] + O2 = 2-hydroxyestrone + oxidized [NADPH--hemoprotein reductase] + H2O + H(+). It carries out the reaction estrone + reduced [NADPH--hemoprotein reductase] + O2 = 4-hydroxyestrone + oxidized [NADPH--hemoprotein reductase] + H2O + H(+). The enzyme catalyses estrone + reduced [NADPH--hemoprotein reductase] + O2 = 6alpha-hydroxyestrone + oxidized [NADPH--hemoprotein reductase] + H2O + H(+). The catalysed reaction is estrone + reduced [NADPH--hemoprotein reductase] + O2 = 15alpha-hydroxyestrone + oxidized [NADPH--hemoprotein reductase] + H2O + H(+). It catalyses the reaction estrone + reduced [NADPH--hemoprotein reductase] + O2 = 16alpha-hydroxyestrone + oxidized [NADPH--hemoprotein reductase] + H2O + H(+). It carries out the reaction 17beta-estradiol + reduced [NADPH--hemoprotein reductase] + O2 = 2-hydroxy-17beta-estradiol + oxidized [NADPH--hemoprotein reductase] + H2O + H(+). The enzyme catalyses 17beta-estradiol + reduced [NADPH--hemoprotein reductase] + O2 = 4-hydroxy-17beta-estradiol + oxidized [NADPH--hemoprotein reductase] + H2O + H(+). The catalysed reaction is 17beta-estradiol + reduced [NADPH--hemoprotein reductase] + O2 = 6alpha-hydroxy-17beta-estradiol + oxidized [NADPH--hemoprotein reductase] + H2O + H(+). It catalyses the reaction 17beta-estradiol + reduced [NADPH--hemoprotein reductase] + O2 = 7alpha-hydroxy-17beta-estradiol + oxidized [NADPH--hemoprotein reductase] + H2O + H(+). It carries out the reaction 17beta-estradiol + reduced [NADPH--hemoprotein reductase] + O2 = 15alpha-hydroxy-17beta-estradiol + oxidized [NADPH--hemoprotein reductase] + H2O + H(+). The enzyme catalyses (5Z,8Z,11Z)-eicosatrienoate + reduced [NADPH--hemoprotein reductase] + O2 = 19-hydroxy-(5Z,8Z,11Z)-eicosatrienoate + oxidized [NADPH--hemoprotein reductase] + H2O + H(+). The catalysed reaction is (5Z,8Z,11Z,14Z)-eicosatetraenoate + reduced [NADPH--hemoprotein reductase] + O2 = 16-hydroxy-(5Z,8Z,11Z,14Z)-eicosatetraenoate + oxidized [NADPH--hemoprotein reductase] + H2O + H(+). It catalyses the reaction (5Z,8Z,11Z,14Z)-eicosatetraenoate + reduced [NADPH--hemoprotein reductase] + O2 = 17-hydroxy-(5Z,8Z,11Z,14Z)-eicosatetraenoate + oxidized [NADPH--hemoprotein reductase] + H2O + H(+). It carries out the reaction (5Z,8Z,11Z,14Z)-eicosatetraenoate + reduced [NADPH--hemoprotein reductase] + O2 = 18-hydroxy-(5Z,8Z,11Z,14Z)-eicosatetraenoate + oxidized [NADPH--hemoprotein reductase] + H2O + H(+). The enzyme catalyses (5Z,8Z,11Z,14Z)-eicosatetraenoate + reduced [NADPH--hemoprotein reductase] + O2 = 19-hydroxy-(5Z,8Z,11Z,14Z)-eicosatetraenoate + oxidized [NADPH--hemoprotein reductase] + H2O + H(+). The catalysed reaction is (5Z,8Z,11Z,14Z,17Z)-eicosapentaenoate + reduced [NADPH--hemoprotein reductase] + O2 = 19-hydroxy-(5Z,8Z,11Z,14Z,17Z)-eicosapentaenoate + oxidized [NADPH--hemoprotein reductase] + H2O + H(+). It catalyses the reaction (5Z,8Z,11Z,14Z)-eicosatetraenoate + reduced [NADPH--hemoprotein reductase] + O2 = (8R,9S)-epoxy-(5Z,11Z,14Z)-eicosatrienoate + oxidized [NADPH--hemoprotein reductase] + H2O + H(+). It carries out the reaction (5Z,8Z,11Z,14Z)-eicosatetraenoate + reduced [NADPH--hemoprotein reductase] + O2 = (11R,12S)-epoxy-(5Z,8Z,14Z)-eicosatrienoate + oxidized [NADPH--hemoprotein reductase] + H2O + H(+). The enzyme catalyses (5Z,8Z,11Z,14Z)-eicosatetraenoate + reduced [NADPH--hemoprotein reductase] + O2 = (14S,15R)-epoxy-(5Z,8Z,11Z)-eicosatrienoate + oxidized [NADPH--hemoprotein reductase] + H2O + H(+). The catalysed reaction is (5Z,8Z,11Z,14Z)-eicosatetraenoate + reduced [NADPH--hemoprotein reductase] + O2 = (14R,15S)-epoxy-(5Z,8Z,11Z)-eicosatrienoate + oxidized [NADPH--hemoprotein reductase] + H2O + H(+). It catalyses the reaction (5Z,8Z,11Z,14Z,17Z)-eicosapentaenoate + reduced [NADPH--hemoprotein reductase] + O2 = (17R,18S)-epoxy-(5Z,8Z,11Z,14Z)-eicosatetraenoate + oxidized [NADPH--hemoprotein reductase] + H2O + H(+). It carries out the reaction (4Z,7Z,10Z,13Z,16Z,19Z)-docosahexaenoate + reduced [NADPH--hemoprotein reductase] + O2 = (19S,20R)-epoxy-(4Z,7Z,10Z,13Z,16Z)-docosapentaenoate + oxidized [NADPH--hemoprotein reductase] + H2O + H(+). The enzyme catalyses (4Z,7Z,10Z,13Z,16Z,19Z)-docosahexaenoate + reduced [NADPH--hemoprotein reductase] + O2 = (19R,20S)-epoxy-(4Z,7Z,10Z,13Z,16Z)-docosapentaenoate + oxidized [NADPH--hemoprotein reductase] + H2O + H(+). The catalysed reaction is all-trans-retinol + reduced [NADPH--hemoprotein reductase] + O2 = all-trans-retinal + oxidized [NADPH--hemoprotein reductase] + 2 H2O + H(+). It catalyses the reaction all-trans-retinal + reduced [NADPH--hemoprotein reductase] + O2 = all-trans-retinoate + oxidized [NADPH--hemoprotein reductase] + H2O + 2 H(+). It carries out the reaction (13S)-hydroperoxy-(9Z,11E)-octadecadienoate = 13-oxo-(9Z,11E)-octadecadienoate + H2O. The enzyme catalyses (12S)-hydroperoxy-(5Z,8Z,10E,14Z)-eicosatetraenoate = 12-oxo-(5Z,8Z,10E,14Z)-eicosatetraenoate + H2O. The catalysed reaction is (15S)-hydroperoxy-(5Z,8Z,11Z,13E)-eicosatetraenoate = 15-oxo-(5Z,8Z,11Z,13E)-eicosatetraenoate + H2O. It catalyses the reaction (5S)-hydroperoxy-(6E,8Z,11Z,14Z)-eicosatetraenoate = 5-oxo-(6E,8Z,11Z,14Z)-eicosatetraenoate + H2O. It functions in the pathway steroid hormone biosynthesis. It participates in lipid metabolism; fatty acid metabolism. The protein operates within cofactor metabolism; retinol metabolism. Its function is as follows. A cytochrome P450 monooxygenase involved in the metabolism of various endogenous substrates, including fatty acids, steroid hormones and vitamins. Mechanistically, uses molecular oxygen inserting one oxygen atom into a substrate, and reducing the second into a water molecule, with two electrons provided by NADPH via cytochrome P450 reductase (CPR; NADPH-ferrihemoprotein reductase). Catalyzes the hydroxylation of carbon-hydrogen bonds. Exhibits high catalytic activity for the formation of hydroxyestrogens from estrone (E1) and 17beta-estradiol (E2), namely 2-hydroxy E1 and E2, as well as D-ring hydroxylated E1 and E2 at the C15alpha and C16alpha positions. Displays different regioselectivities for polyunsaturated fatty acids (PUFA) hydroxylation. Catalyzes the epoxidation of double bonds of certain PUFA. Converts arachidonic acid toward epoxyeicosatrienoic acid (EET) regioisomers, 8,9-, 11,12-, and 14,15-EET, that function as lipid mediators in the vascular system. Displays an absolute stereoselectivity in the epoxidation of eicosapentaenoic acid (EPA) producing the 17(R),18(S) enantiomer. May play an important role in all-trans retinoic acid biosynthesis in extrahepatic tissues. Catalyzes two successive oxidative transformation of all-trans retinol to all-trans retinal and then to the active form all-trans retinoic acid. May also participate in eicosanoids metabolism by converting hydroperoxide species into oxo metabolites (lipoxygenase-like reaction, NADPH-independent). The chain is Cytochrome P450 1A1 (CYP1A1) from Mesocricetus auratus (Golden hamster).